A 1070-amino-acid chain; its full sequence is 3',5'-cyclic-AMP phosphodiesterase (1070 aa).

Disordered stretches follow at residues 1–91, 166–215, 487–516, and 615–653; these read MSQE…KQDS, STSI…TRFQ, VPAS…LSQG, and SAGQ…RLPT. Residues 51–69 are compositionally biased toward low complexity; that stretch reads KQVQVQSQKFSSTSSTTKV. The segment covering 70-84 has biased composition (polar residues); it reads ATHSFSMSSSAGTTG. Residues 166–210 show a composition bias toward low complexity; sequence STSIITSSEQRTSTSTSSSSSTRYIASGSSNLAGGNSNSASSASS. Positions 488 to 506 are enriched in polar residues; sequence PASNKSRRPNQSSSASRSG. Residues 656 to 985 enclose the PDEase domain; it reads VETPRENELG…DYYQSMIPPS (330 aa). The Proton donor role is filled by H732. 732-736 contacts 3',5'-cyclic AMP; that stretch reads HNSLH. A divalent metal cation-binding residues include H736, H772, D773, and D890. 3',5'-cyclic AMP contacts are provided by D773, D890, and Q941. Residues 1007–1024 are compositionally biased toward acidic residues; it reads EESDQENLAELEEGDESG. Positions 1007–1070 are disordered; the sequence is EESDQENLAE…CQNQPQHGGM (64 aa). Residues 1025 to 1042 show a composition bias toward low complexity; it reads GESTTTGTTGTTAASALS. A compositionally biased stretch (gly residues) spans 1043–1054; it reads GAGGGGGGGGGM. Residues 1060-1070 show a composition bias toward polar residues; sequence GCQNQPQHGGM.

It belongs to the cyclic nucleotide phosphodiesterase family. PDE4 subfamily. Monomer. The cofactor is a divalent metal cation.

It catalyses the reaction 3',5'-cyclic AMP + H2O = AMP + H(+). It participates in purine metabolism; 3',5'-cyclic AMP degradation; AMP from 3',5'-cyclic AMP: step 1/1. In terms of biological role, hydrolyzes the second messenger cAMP, which is a key regulator of many important physiological processes. Vital for female fertility. Required for learning/memory. The protein is 3',5'-cyclic-AMP phosphodiesterase (dnc) of Drosophila melanogaster (Fruit fly).